A 245-amino-acid chain; its full sequence is 1-(5-phosphoribosyl)-5-[(5-phosphoribosylamino)methylideneamino] imidazole-4-carboxamide isomerase (245 aa).

Residue aspartate 7 is the Proton acceptor of the active site. Aspartate 129 acts as the Proton donor in catalysis.

The protein belongs to the HisA/HisF family.

The protein resides in the cytoplasm. The enzyme catalyses 1-(5-phospho-beta-D-ribosyl)-5-[(5-phospho-beta-D-ribosylamino)methylideneamino]imidazole-4-carboxamide = 5-[(5-phospho-1-deoxy-D-ribulos-1-ylimino)methylamino]-1-(5-phospho-beta-D-ribosyl)imidazole-4-carboxamide. It functions in the pathway amino-acid biosynthesis; L-histidine biosynthesis; L-histidine from 5-phospho-alpha-D-ribose 1-diphosphate: step 4/9. The chain is 1-(5-phosphoribosyl)-5-[(5-phosphoribosylamino)methylideneamino] imidazole-4-carboxamide isomerase from Escherichia coli (strain ATCC 8739 / DSM 1576 / NBRC 3972 / NCIMB 8545 / WDCM 00012 / Crooks).